Here is a 201-residue protein sequence, read N- to C-terminus: Probable chemoreceptor glutamine deamidase CheD (201 aa).

The protein belongs to the CheD family.

The catalysed reaction is L-glutaminyl-[protein] + H2O = L-glutamyl-[protein] + NH4(+). In terms of biological role, probably deamidates glutamine residues to glutamate on methyl-accepting chemotaxis receptors (MCPs), playing an important role in chemotaxis. The sequence is that of Probable chemoreceptor glutamine deamidase CheD from Chlorobium luteolum (strain DSM 273 / BCRC 81028 / 2530) (Pelodictyon luteolum).